The following is a 325-amino-acid chain: Biotin synthase (325 aa).

Residues 43–262 (CSVETAQLLS…VAVARLLMPR (220 aa)) form the Radical SAM core domain. The [4Fe-4S] cluster site is built by cysteine 58, cysteine 62, and cysteine 65. The [2Fe-2S] cluster site is built by cysteine 102, cysteine 133, cysteine 193, and arginine 266.

The protein belongs to the radical SAM superfamily. Biotin synthase family. Homodimer. [4Fe-4S] cluster is required as a cofactor. [2Fe-2S] cluster serves as cofactor.

It carries out the reaction (4R,5S)-dethiobiotin + (sulfur carrier)-SH + 2 reduced [2Fe-2S]-[ferredoxin] + 2 S-adenosyl-L-methionine = (sulfur carrier)-H + biotin + 2 5'-deoxyadenosine + 2 L-methionine + 2 oxidized [2Fe-2S]-[ferredoxin]. It participates in cofactor biosynthesis; biotin biosynthesis; biotin from 7,8-diaminononanoate: step 2/2. Its function is as follows. Catalyzes the conversion of dethiobiotin (DTB) to biotin by the insertion of a sulfur atom into dethiobiotin via a radical-based mechanism. The sequence is that of Biotin synthase from Azorhizobium caulinodans (strain ATCC 43989 / DSM 5975 / JCM 20966 / LMG 6465 / NBRC 14845 / NCIMB 13405 / ORS 571).